A 264-amino-acid chain; its full sequence is tRNA pseudouridine synthase A (264 aa).

Asp-51 serves as the catalytic Nucleophile. A substrate-binding site is contributed by Tyr-109.

The protein belongs to the tRNA pseudouridine synthase TruA family. Homodimer.

It catalyses the reaction uridine(38/39/40) in tRNA = pseudouridine(38/39/40) in tRNA. Functionally, formation of pseudouridine at positions 38, 39 and 40 in the anticodon stem and loop of transfer RNAs. The polypeptide is tRNA pseudouridine synthase A (Photorhabdus laumondii subsp. laumondii (strain DSM 15139 / CIP 105565 / TT01) (Photorhabdus luminescens subsp. laumondii)).